Reading from the N-terminus, the 95-residue chain is Mitochondrial import inner membrane translocase subunit Tim13 (95 aa).

An N-acetylmethionine modification is found at M1. S7 is modified (phosphoserine). A Twin CX3C motif motif is present at residues 46 to 69; the sequence is CFRKCIGKPGGSLDNSEQKCIAMC. 2 cysteine pairs are disulfide-bonded: C46–C69 and C50–C65. Position 53 is an N6-succinyllysine (K53).

The protein belongs to the small Tim family. In terms of assembly, heterohexamer; composed of 3 copies of TIMM8 (TIMM8A or TIMM8B) and 3 copies of TIMM13, named soluble 70 kDa complex. Associates with the TIM22 complex, whose core is composed of TIMM22. In terms of tissue distribution, present at high level in liver and brain, and at lower level in muscle and heart. In CNS sections, it is predominantly present in the soma and the dendritic portion of the Purkinje cells of the cerebellum, but not in the glial cells. Scattered expression also is also detected in the brain stem, olfactory bulb, substantia nigra, hippocampus and striatum (at protein level).

Its subcellular location is the mitochondrion inner membrane. In terms of biological role, mitochondrial intermembrane chaperone that participates in the import and insertion of some multi-pass transmembrane proteins into the mitochondrial inner membrane. Also required for the transfer of beta-barrel precursors from the TOM complex to the sorting and assembly machinery (SAM complex) of the outer membrane. Acts as a chaperone-like protein that protects the hydrophobic precursors from aggregation and guide them through the mitochondrial intermembrane space. The TIMM8-TIMM13 complex mediates the import of proteins such as TIMM23, SLC25A12/ARALAR1 and SLC25A13/ARALAR2, while the predominant TIMM9-TIMM10 70 kDa complex mediates the import of much more proteins. The polypeptide is Mitochondrial import inner membrane translocase subunit Tim13 (Timm13) (Mus musculus (Mouse)).